The following is a 551-amino-acid chain: Small ribosomal subunit protein bS1 (551 aa).

S1 motif domains are found at residues 21 to 83 (GALV…LSRE), 101 to 167 (GEMV…VSRR), 188 to 256 (GQEI…LGMK), 273 to 343 (NSRV…LGIK), 360 to 430 (DEKI…LGIK), and 447 to 516 (DAVI…VSHK).

It belongs to the bacterial ribosomal protein bS1 family.

Its function is as follows. Binds mRNA; thus facilitating recognition of the initiation point. It is needed to translate mRNA with a short Shine-Dalgarno (SD) purine-rich sequence. This Coxiella burnetii (strain RSA 493 / Nine Mile phase I) protein is Small ribosomal subunit protein bS1 (rpsA).